A 513-amino-acid chain; its full sequence is Na(+)/H(+) antiporter NhaB (513 aa).

The next 12 membrane-spanning stretches (helical) occupy residues 23–43 (LALI…PFVA), 52–72 (IFTL…LLAI), 97–117 (LLLM…LFIF), 120–140 (LLLS…AAAF), 144–164 (FLDA…FYGI), 202–222 (LMMH…VGEP), 238–258 (FFLR…LTCL), 303–323 (AIIG…VGLI), 348–368 (TESL…AVII), 391–411 (LFYI…VGTI), 447–467 (ATPN…APLI), and 475–495 (VWMA…CVEF).

It belongs to the NhaB Na(+)/H(+) (TC 2.A.34) antiporter family.

The protein localises to the cell inner membrane. The enzyme catalyses 2 Na(+)(in) + 3 H(+)(out) = 2 Na(+)(out) + 3 H(+)(in). Functionally, na(+)/H(+) antiporter that extrudes sodium in exchange for external protons. The chain is Na(+)/H(+) antiporter NhaB from Shigella flexneri serotype 5b (strain 8401).